Here is a 493-residue protein sequence, read N- to C-terminus: Sodium-coupled neutral amino acid symporter 2 (493 aa).

Residues 1 to 72 lie on the Cytoplasmic side of the membrane; that stretch reads MNNAEVLNVA…LPGTTSFGMS (72 aa). Residues 1-92 form a regulates protein turnover upon amino acid deprivation region; the sequence is MNNAEVLNVA…SGILGLSYAM (92 aa). The helical transmembrane segment at 73–92 threads the bilayer; that stretch reads VFNLSNAIVGSGILGLSYAM. Na(+) is bound at residue Asn-78. Over 93–98 the chain is Extracellular; that stretch reads ANTGIA. The chain crosses the membrane as a helical span at residues 99–119; that stretch reads LFMILLVFVTVFSLYSIHLLL. Residues 120 to 154 are Cytoplasmic-facing; it reads KTANEGGSLLYEQLGLKAFGIPGKLAASGSVTLQN. A helical membrane pass occupies residues 155–173; the sequence is IGAMSSYLYIVKYELPLVI. Residues 174–184 lie on the Extracellular side of the membrane; that stretch reads KALMDIKESNG. The chain crosses the membrane as a helical span at residues 185-205; it reads EWYLNGDYLVIMVSLAIILPL. Topologically, residues 206–213 are cytoplasmic; it reads SLLRNLGY. The chain crosses the membrane as a helical span at residues 214–234; the sequence is LGYTSGFSPLCMVFFLIVVIY. Residues 235-279 lie on the Extracellular side of the membrane; sequence KKFEIPCPLEAMNMTSNSSSHDHMAHNETDDEMCKPKYFVFNSQT. Cys-241 and Cys-268 form a disulfide bridge. N-linked (GlcNAc...) asparagine glycosylation is found at Asn-247, Asn-251, and Asn-261. The chain crosses the membrane as a helical span at residues 280 to 300; it reads VYAVPILTFSFVCHPAVLPIY. Topologically, residues 301-316 are cytoplasmic; the sequence is QELKGRSRRRMMNVSN. A helical membrane pass occupies residues 317–337; it reads VSFFAMFIMYLLAALFGYLTF. Topologically, residues 338 to 358 are extracellular; that stretch reads YSKVEPELLHTYSKVFGAGVI. A helical transmembrane segment spans residues 359 to 379; it reads FVVVRLAVLMAVTLTVPIVIF. Thr-373 serves as a coordination point for Na(+). The Cytoplasmic portion of the chain corresponds to 380–400; the sequence is PIRSSLNELFCSGKDFAWIRH. Residues 401–421 form a helical membrane-spanning segment; sequence ILITFLILAFTNVLVIFVPTI. Residues 422–423 are Extracellular-facing; the sequence is RD. A helical membrane pass occupies residues 424 to 444; the sequence is IFGFIGASAAAMLVFILPSAF. The Cytoplasmic segment spans residues 445-459; the sequence is YIRLVKKESMKSVQK. A helical membrane pass occupies residues 460–482; the sequence is IGALLFLIGGIIVMIGSMTLIIL. Residues 483-493 lie on the Extracellular side of the membrane; the sequence is DWIHNSTSGGN.

The protein belongs to the amino acid/polyamine transporter 2 family.

It localises to the cell membrane. It carries out the reaction L-alanine(in) + Na(+)(in) = L-alanine(out) + Na(+)(out). The enzyme catalyses glycine(in) + Na(+)(in) = glycine(out) + Na(+)(out). It catalyses the reaction L-serine(in) + Na(+)(in) = L-serine(out) + Na(+)(out). The catalysed reaction is L-proline(in) + Na(+)(in) = L-proline(out) + Na(+)(out). It carries out the reaction L-methionine(in) + Na(+)(in) = L-methionine(out) + Na(+)(out). The enzyme catalyses L-histidine(in) + Na(+)(in) = L-histidine(out) + Na(+)(out). It catalyses the reaction L-asparagine(in) + Na(+)(in) = L-asparagine(out) + Na(+)(out). The catalysed reaction is L-glutamine(in) + Na(+)(in) = L-glutamine(out) + Na(+)(out). It carries out the reaction L-threonine(in) + Na(+)(in) = L-threonine(out) + Na(+)(out). The enzyme catalyses L-leucine(in) + Na(+)(in) = L-leucine(out) + Na(+)(out). It catalyses the reaction L-phenylalanine(in) + Na(+)(in) = L-phenylalanine(out) + Na(+)(out). Inhibited by N-methyl-D-glucamine. Inhibited by choline. Allosteric regulation of sodium ions binding by pH. Symporter that cotransports neutral amino acids and sodium ions from the extracellular to the intracellular side of the cell membrane. The transport is pH-sensitive, Li(+)-intolerant, electrogenic, driven by the Na(+) electrochemical gradient and cotransports of neutral amino acids and sodium ions with a stoichiometry of 1:1. This chain is Sodium-coupled neutral amino acid symporter 2, found in Xenopus tropicalis (Western clawed frog).